The sequence spans 63 residues: Large ribosomal subunit protein bL28 (63 aa).

The protein belongs to the bacterial ribosomal protein bL28 family.

The sequence is that of Large ribosomal subunit protein bL28 (rpmB) from Selenomonas ruminantium.